Reading from the N-terminus, the 313-residue chain is Porphobilinogen deaminase (313 aa).

An S-(dipyrrolylmethanemethyl)cysteine modification is found at Cys-242.

The protein belongs to the HMBS family. As to quaternary structure, monomer. It depends on dipyrromethane as a cofactor.

The enzyme catalyses 4 porphobilinogen + H2O = hydroxymethylbilane + 4 NH4(+). It participates in porphyrin-containing compound metabolism; protoporphyrin-IX biosynthesis; coproporphyrinogen-III from 5-aminolevulinate: step 2/4. Its function is as follows. Tetrapolymerization of the monopyrrole PBG into the hydroxymethylbilane pre-uroporphyrinogen in several discrete steps. This is Porphobilinogen deaminase from Photorhabdus laumondii subsp. laumondii (strain DSM 15139 / CIP 105565 / TT01) (Photorhabdus luminescens subsp. laumondii).